The chain runs to 293 residues: MPWIQLKLNTTGANAEDLSDALMEAGSVSITFQDTHDTPVFEPLPGETRLWGDTDVIGLFDAETDMKAVVAQLEQHPLLGAGFAHKIEQLEDKDWEREWMDNFHPMRFGERLWICPSWRDVPDENAVNVMLDPGLAFGTGTHPTTSLCLQWLDGLDLNGKTVIDFGCGSGILAIAALKLGAAKAIGIDIDPQAIQASRDNAQRNGVSERLELYLPQDQPESMKADVVVANILAGPLRELAPLISVLPVSGGLLGLSGILASQAESVCEAYADLFALDPVVEKEEWCRITGRKN.

Positions 145, 166, 188, and 230 each coordinate S-adenosyl-L-methionine.

This sequence belongs to the methyltransferase superfamily. PrmA family.

The protein localises to the cytoplasm. The catalysed reaction is L-lysyl-[protein] + 3 S-adenosyl-L-methionine = N(6),N(6),N(6)-trimethyl-L-lysyl-[protein] + 3 S-adenosyl-L-homocysteine + 3 H(+). Methylates ribosomal protein L11. The sequence is that of Ribosomal protein L11 methyltransferase from Klebsiella pneumoniae subsp. pneumoniae (strain ATCC 700721 / MGH 78578).